Here is a 379-residue protein sequence, read N- to C-terminus: Demethylspheroidene O-methyltransferase (379 aa).

2 residues coordinate S-adenosyl-L-methionine: Asp-235 and Arg-279.

The protein belongs to the class I-like SAM-binding methyltransferase superfamily. Cation-independent O-methyltransferase family.

It catalyses the reaction demethylspheroidene + S-adenosyl-L-methionine = spheroidene + S-adenosyl-L-homocysteine + H(+). It functions in the pathway carotenoid biosynthesis; spheroidene biosynthesis. Its function is as follows. Methyltransferase that mediates the O-methylation of 1-hydroxy carotenoids. Converts hydroxyneurosporene to methoxyneurosporene or demethylspheroidene to spheroidene. Also able to produce spirilloxanthin. In Cereibacter sphaeroides (strain ATCC 17023 / DSM 158 / JCM 6121 / CCUG 31486 / LMG 2827 / NBRC 12203 / NCIMB 8253 / ATH 2.4.1.) (Rhodobacter sphaeroides), this protein is Demethylspheroidene O-methyltransferase (crtF).